A 396-amino-acid polypeptide reads, in one-letter code: S-adenosylmethionine decarboxylase proenzyme (396 aa).

Active-site residues include Glu29 and Glu32. Catalysis depends on Ser88, which acts as the Schiff-base intermediate with substrate; via pyruvic acid. Ser88 carries the post-translational modification Pyruvic acid (Ser); by autocatalysis. The active-site Proton donor; for catalytic activity is the Cys102. Residues Ser287 and His301 each act as proton acceptor; for processing activity in the active site.

It belongs to the eukaryotic AdoMetDC family. Pyruvate is required as a cofactor. Is synthesized initially as an inactive proenzyme. Formation of the active enzyme involves a self-maturation process in which the active site pyruvoyl group is generated from an internal serine residue via an autocatalytic post-translational modification. Two non-identical subunits are generated from the proenzyme in this reaction, and the pyruvate is formed at the N-terminus of the alpha chain, which is derived from the carboxyl end of the proenzyme. The post-translation cleavage follows an unusual pathway, termed non-hydrolytic serinolysis, in which the side chain hydroxyl group of the serine supplies its oxygen atom to form the C-terminus of the beta chain, while the remainder of the serine residue undergoes an oxidative deamination to produce ammonia and the pyruvoyl group blocking the N-terminus of the alpha chain.

It catalyses the reaction S-adenosyl-L-methionine + H(+) = S-adenosyl 3-(methylsulfanyl)propylamine + CO2. The protein operates within amine and polyamine biosynthesis; S-adenosylmethioninamine biosynthesis; S-adenosylmethioninamine from S-adenosyl-L-methionine: step 1/1. In terms of biological role, catalyzes the decarboxylation of S-adenosylmethionine, a key step in the biosynthetic pathway for spermidine and spermine. It is essential for normal growth, sporulation, and maintenance of ds-RNA virus. This Saccharomyces cerevisiae (strain ATCC 204508 / S288c) (Baker's yeast) protein is S-adenosylmethionine decarboxylase proenzyme (SPE2).